The primary structure comprises 803 residues: Dynein axonemal intermediate chain 4 (803 aa).

Residues 1-33 show a composition bias toward polar residues; the sequence is MPSSPTSTRKQTNFTASVSAQSRKSISFGNPKS. 3 disordered regions span residues 1–41, 88–109, and 143–163; these read MPSS…GYAG, LYHPDPHAMPTKPSKLLTSQEG, and STVSKSSISTTESMTEDLEDP. Residues 143-155 are compositionally biased toward low complexity; that stretch reads STVSKSSISTTES. 6 WD repeats span residues 492–532, 541–589, 616–656, 660–700, 703–742, and 748–787; these read QSPY…NTPV, KHLG…DCHD, SRQA…QYLE, GHKG…PFFT, PTTYVVYDVAWSPKSAYIFAAANENRVEIWDLQISTLDPL, and NPGIKFTTVLFAKQTDCLLVGDSDGQVAVYELRNMPTPTE.

As to quaternary structure, part of the multisubunit axonemal dynein complex formed at least of two heavy chains and a number of intermediate and light chains. Associated with axonemal dynein subunits such as, DNAH2, DNAI3, and DYNLT1. Interacts with DYNLT1.

The protein localises to the cytoplasm. It localises to the cytoskeleton. The protein resides in the flagellum axoneme. It is found in the cilium axoneme. Its subcellular location is the dynein axonemal particle. Plays a critical role in the assembly of axonemal dynein complex, thereby playing a role in ciliary motility. In Rattus norvegicus (Rat), this protein is Dynein axonemal intermediate chain 4.